Here is a 41-residue protein sequence, read N- to C-terminus: NCIGEQVPCDENDPRCCSGLVVLKKTLHGIWIKSSYCYKCK.

Cystine bridges form between C2–C16, C9–C37, and C17–C40.

Belongs to the neurotoxin 14 (magi-1) family. 01 (HNTX-16) subfamily. As to expression, expressed by the venom gland.

The protein resides in the secreted. Intracerebroventricular injection paralyzes mice. Has no effect on voltage-gated sodium currents. The protein is U3-theraphotoxin-Hs1a of Cyriopagopus schmidti (Chinese bird spider).